A 64-amino-acid polypeptide reads, in one-letter code: Large ribosomal subunit protein bL35 (64 aa).

The disordered stretch occupies residues 1–23; sequence MPKMKTKSGAAKRFKKTANGFKH.

The protein belongs to the bacterial ribosomal protein bL35 family.

The protein is Large ribosomal subunit protein bL35 of Stutzerimonas stutzeri (strain A1501) (Pseudomonas stutzeri).